A 1516-amino-acid polypeptide reads, in one-letter code: EF-hand calcium-binding domain-containing protein 6 (1516 aa).

The interval 1-23 (MKRNGTRLNFAKANSTKSGSTRA) is disordered. The segment covering 12 to 21 (KANSTKSGST) has biased composition (polar residues). EF-hand domains lie at 96–131 (SRRDDIKKVFQILDRNHNQMVTKGDLKRVITAFLIP), 197–232 (RNMRSIRKVFQVMDVNNTGLVQPQELRRVLETFCLR), 321–356 (KSYEKIEKALSAGDPSKGGYISLNYLKVVLDTFIYR), 444–462 (SGHITWEELRHILNCMVAK), and 528–563 (RNLQAFYSMLQSYDLRDTGTIGKNNFRKVMRVFCPY). Positions 109, 111, 113, 115, 120, 210, 212, 214, and 221 each coordinate Ca(2+). The tract at residues 618-638 (EEPGQQDERTQPSGEKTSEIN) is disordered. Residues 628–638 (QPSGEKTSEIN) show a composition bias toward polar residues. EF-hand domains are found at residues 674–690 (KINQEEFRKVLERSGMP), 763–798 (ESFRDVYSAFFRIDLDRDGIISMHDFHRLLQYLQLN), 905–940 (LTPREFEKLWQNYDTEGRGYITYQEFLHRLGIRYSP), 1086–1121 (SSQPALVEAFSALDKEDTGFVKAMEFGDVLRSVCQK), 1193–1228 (SHYHTIVQEFENFDTLKSNTVSRDEFRSICTRHIQI), and 1229–1264 (LTDEQFDRLWSELPVNAKGRLKYQDFLSKLSIERVP). The Ca(2+) site is built by aspartate 776, aspartate 778, aspartate 780, and aspartate 787. Threonine 906 is modified (phosphothreonine). The interval 1263 to 1318 (VPSPPMAAGDSGESTMAQRGSSAPEFSQGTRSNLYSPPRDSRVGLKSRSHPCTPVG) is disordered. At serine 1265 the chain carries Phosphoserine. Residues 1274-1297 (GESTMAQRGSSAPEFSQGTRSNLY) show a composition bias toward polar residues. Serine 1311 is subject to Phosphoserine. Residues threonine 1315 and threonine 1319 each carry the phosphothreonine modification. The segment at 1318-1516 (GTPPLQNCEP…YNDFLRAFLQ (199 aa)) is interaction with PARK7. EF-hand domains follow at residues 1348–1373 (KEKDTDKQGTISAAEFLALVEKFKLD), 1374–1409 (ISREESQQLIVKYDLKNNGKFAYCDFIQSCVLLLKA), 1454–1484 (MRRSFKTYDKNGTGLLSVADFRKVLRQYSIN), and 1485–1516 (LSEEEFFHVLEYYDKSLSSKISYNDFLRAFLQ). The segment at 1422 to 1516 (NADKMKEAGM…YNDFLRAFLQ (95 aa)) is interaction with AR. Positions 1462, 1464, 1466, and 1473 each coordinate Ca(2+).

In terms of assembly, microtubule inner protein component of sperm flagellar doublet microtubules. Binds PARK7. Part of a ternary complex containing PARK7, EFCAB6/DJBP and AR.

Its subcellular location is the nucleus. It is found in the cytoplasm. The protein resides in the cytoskeleton. It localises to the flagellum axoneme. Negatively regulates the androgen receptor by recruiting histone deacetylase complex, and protein DJ-1 antagonizes this inhibition by abrogation of this complex. Microtubule inner protein (MIP) part of the dynein-decorated doublet microtubules (DMTs) in cilia axoneme, which is required for motile cilia beating. This Mus musculus (Mouse) protein is EF-hand calcium-binding domain-containing protein 6 (Efcab6).